The primary structure comprises 274 residues: Pyrroline-5-carboxylate reductase 3 (274 aa).

The protein belongs to the pyrroline-5-carboxylate reductase family. Homodecamer; composed of 5 homodimers.

The protein localises to the cytoplasm. It catalyses the reaction L-proline + NADP(+) = (S)-1-pyrroline-5-carboxylate + NADPH + 2 H(+). The catalysed reaction is L-proline + NAD(+) = (S)-1-pyrroline-5-carboxylate + NADH + 2 H(+). It functions in the pathway amino-acid biosynthesis; L-proline biosynthesis; L-proline from L-glutamate 5-semialdehyde: step 1/1. Functionally, oxidoreductase that catalyzes the last step in proline biosynthesis, which corresponds to the reduction of pyrroline-5-carboxylate (P5C) to L-proline using NAD(P)H. Proline is synthesized from either glutamate or ornithine; both are converted to P5C, and then to proline via pyrroline-5-carboxylate reductases (PYCRs). PYCR3 is exclusively linked to the biosynthesis of proline from ornithine. The chain is Pyrroline-5-carboxylate reductase 3 from Xenopus laevis (African clawed frog).